Consider the following 231-residue polypeptide: MSVGVWAVIPAAGRGVRFGSPVPKQYLPVVGRPLIVYTLEALAAHPAVCGLMVVVAEGDLAWSGWTELAGKPLLTCSGGVTRAASVLSGLLALPQVVHADDFVLVHDAARPNVALSDLERLLEAGCAHPVGAILAVPVRDTLKRAGSDGSIDGTEPRERLWRAFTPQLFRRSQLVRGLQVAAADGIEMTDEAMVMERQGLRPLLVECAESNFKITTPDDLVRFEFELARRV.

It belongs to the IspD/TarI cytidylyltransferase family. IspD subfamily.

It carries out the reaction 2-C-methyl-D-erythritol 4-phosphate + CTP + H(+) = 4-CDP-2-C-methyl-D-erythritol + diphosphate. Its pathway is isoprenoid biosynthesis; isopentenyl diphosphate biosynthesis via DXP pathway; isopentenyl diphosphate from 1-deoxy-D-xylulose 5-phosphate: step 2/6. Catalyzes the formation of 4-diphosphocytidyl-2-C-methyl-D-erythritol from CTP and 2-C-methyl-D-erythritol 4-phosphate (MEP). This is 2-C-methyl-D-erythritol 4-phosphate cytidylyltransferase from Xylella fastidiosa (strain M23).